The chain runs to 118 residues: Large ribosomal subunit protein uL18 (118 aa).

Positions 1–25 are disordered; that stretch reads MISKPDKNKLRQKRHRRVRGKLSGT. Over residues 10-20 the composition is skewed to basic residues; the sequence is LRQKRHRRVRG.

This sequence belongs to the universal ribosomal protein uL18 family. Part of the 50S ribosomal subunit; part of the 5S rRNA/L5/L18/L25 subcomplex. Contacts the 5S and 23S rRNAs.

This is one of the proteins that bind and probably mediate the attachment of the 5S RNA into the large ribosomal subunit, where it forms part of the central protuberance. This is Large ribosomal subunit protein uL18 from Streptococcus pneumoniae (strain Hungary19A-6).